We begin with the raw amino-acid sequence, 274 residues long: 3-methyl-2-oxobutanoate hydroxymethyltransferase (274 aa).

Positions 49 and 88 each coordinate Mg(2+). Residues 49 to 50, D88, and K118 contribute to the 3-methyl-2-oxobutanoate site; that span reads DS. E120 serves as a coordination point for Mg(2+). Residue E187 is the Proton acceptor of the active site.

Belongs to the PanB family. Homodecamer; pentamer of dimers. It depends on Mg(2+) as a cofactor.

Its subcellular location is the cytoplasm. It catalyses the reaction 3-methyl-2-oxobutanoate + (6R)-5,10-methylene-5,6,7,8-tetrahydrofolate + H2O = 2-dehydropantoate + (6S)-5,6,7,8-tetrahydrofolate. Its pathway is cofactor biosynthesis; (R)-pantothenate biosynthesis; (R)-pantoate from 3-methyl-2-oxobutanoate: step 1/2. Catalyzes the reversible reaction in which hydroxymethyl group from 5,10-methylenetetrahydrofolate is transferred onto alpha-ketoisovalerate to form ketopantoate. This Parvibaculum lavamentivorans (strain DS-1 / DSM 13023 / NCIMB 13966) protein is 3-methyl-2-oxobutanoate hydroxymethyltransferase.